Consider the following 1508-residue polypeptide: Gem-associated protein 5 (1508 aa).

Positions M1–L124 are important for interaction with U1 snRNA. Residues N13 to Y15 are interaction with U4 snRNA. Residue S48 is modified to Phosphoserine. T51 carries the post-translational modification Phosphothreonine. WD repeat units follow at residues G62–E104, L107–F148, E150–H189, G193–I264, T280–Y321, H333–T374, S377–D417, G424–I464, Y468–Q509, K533–T573, and Q576–P622. At S624 the chain carries Phosphoserine. WD repeat units lie at residues G637–N677 and G680–P720. Residues Q715–E790 are disordered. Basic residues predominate over residues A739–T748. A Phosphothreonine modification is found at T751. A Glycyl lysine isopeptide (Lys-Gly) (interchain with G-Cter in SUMO2) cross-link involves residue K754. 4 positions are modified to phosphoserine: S757, S770, S778, and S847. Disordered regions lie at residues E1313 to L1343 and Q1389 to P1428. Residues E1362–L1393 are a coiled coil. Residues K1390–N1399 are compositionally biased toward polar residues.

It belongs to the WD repeat gemin-5 family. As to quaternary structure, part of the core SMN complex that contains SMN1, GEMIN2/SIP1, DDX20/GEMIN3, GEMIN4, GEMIN5, GEMIN6, GEMIN7, GEMIN8 and STRAP/UNRIP. Part of the SMN-Sm complex that contains SMN1, GEMIN2/SIP1, DDX20/GEMIN3, GEMIN4, GEMIN5, GEMIN6, GEMIN7, GEMIN8, STRAP/UNRIP and the Sm proteins SNRPB, SNRPD1, SNRPD2, SNRPD3, SNRPE, SNRPF and SNRPG. Interacts with GEMIN2; the interaction is direct. Interacts with SMN1, SNRPB, SNRPD1, SNRPD2, SNRPD3 and SNRPE; the interaction is direct. Interacts with cytosolic DDX20/GEMIN3 and GEMIN4. Interacts with SNRNP70 and HNRNPU. Identified in a complex with 80S ribosomes; binds to the 60S large ribosomal subunit. Interacts with the ribosomal subunits RPL3 and RPL4.

It is found in the nucleus. Its subcellular location is the nucleoplasm. The protein localises to the gem. It localises to the cytoplasm. In terms of biological role, the SMN complex catalyzes the assembly of small nuclear ribonucleoproteins (snRNPs), the building blocks of the spliceosome, and thereby plays an important role in the splicing of cellular pre-mRNAs. Most spliceosomal snRNPs contain a common set of Sm proteins SNRPB, SNRPD1, SNRPD2, SNRPD3, SNRPE, SNRPF and SNRPG that assemble in a heptameric protein ring on the Sm site of the small nuclear RNA to form the core snRNP (Sm core). In the cytosol, the Sm proteins SNRPD1, SNRPD2, SNRPE, SNRPF and SNRPG are trapped in an inactive 6S pICln-Sm complex by the chaperone CLNS1A that controls the assembly of the core snRNP. To assemble core snRNPs, the SMN complex accepts the trapped 5Sm proteins from CLNS1A forming an intermediate. Binding of snRNA inside 5Sm ultimately triggers eviction of the SMN complex, thereby allowing binding of SNRPD3 and SNRPB to complete assembly of the core snRNP. Within the SMN complex, GEMIN5 recognizes and delivers the small nuclear RNAs (snRNAs) to the SMN complex. Binds to the 7-methylguanosine cap of RNA molecules. Binds to the 3'-UTR of SMN1 mRNA and regulates its translation; does not affect mRNA stability. May play a role in the regulation of protein synthesis via its interaction with ribosomes. This Homo sapiens (Human) protein is Gem-associated protein 5 (GEMIN5).